Consider the following 587-residue polypeptide: Pyruvate kinase (587 aa).

Arg-33 lines the substrate pocket. The K(+) site is built by Asn-35, Ser-37, Asp-67, and Thr-68. Residue 35-38 participates in ATP binding; that stretch reads NFSH. Residues Arg-74 and Lys-157 each contribute to the ATP site. Residue Lys-221 participates in substrate binding. Glu-223 contributes to the Mg(2+) binding site. Residues Gly-246, Asp-247, and Thr-279 each coordinate substrate. A Mg(2+)-binding site is contributed by Asp-247.

It belongs to the pyruvate kinase family. This sequence in the C-terminal section; belongs to the PEP-utilizing enzyme family. As to quaternary structure, homotetramer. It depends on Mg(2+) as a cofactor. The cofactor is K(+). The N-terminus is blocked.

It carries out the reaction pyruvate + ATP = phosphoenolpyruvate + ADP + H(+). Its pathway is carbohydrate degradation; glycolysis; pyruvate from D-glyceraldehyde 3-phosphate: step 5/5. Exhibits homotropic positive cooperativity for PEP. Allosterically activated by ribose-5-phosphate, AMP and other nucleoside monophosphates but not by fructose-1,6-bisphosphate. Functionally, catalyzes the phosphoryl transfer from phosphoenolpyruvate (PEP) to ADP to form pyruvate and ATP. Has a broad specificity for nucleoside diphosphates and can use ADP, GDP, IDP and UDP. This Geobacillus stearothermophilus (Bacillus stearothermophilus) protein is Pyruvate kinase (pyk).